The primary structure comprises 73 residues: Kappa-scoloptoxin(03)-Ssm1b (73 aa).

A signal peptide spans 1 to 23 (MKPSMAILLVIALIIFSLDKSYS). 3 disulfide bridges follow: cysteine 32–cysteine 58, cysteine 41–cysteine 57, and cysteine 44–cysteine 67.

Contains 3 disulfide bonds. As to expression, expressed by the venom gland.

It localises to the secreted. Functionally, inhibits voltage-gated potassium channels. The chain is Kappa-scoloptoxin(03)-Ssm1b from Scolopendra mutilans (Chinese red-headed centipede).